The primary structure comprises 517 residues: Fluconazole resistance protein 1 (517 aa).

The segment at residues 26 to 52 (CDSCRIKKTKCDGKKPCNRCTLDNKIC) is a DNA-binding region (zn(2)-C6 fungal-type). Disordered stretches follow at residues 106 to 137 (KSVD…QNST), 250 to 270 (SAQF…QQQQ), 284 to 307 (SDIE…PPTS), and 378 to 403 (GSIQ…VSSF). The span at 113–124 (SSPASSTPNSSS) shows a compositional bias: low complexity. Residues 250-260 (SAQFSKGTFSP) show a composition bias toward polar residues. Residues 261–270 (QQQQLQQQQQ) show a composition bias toward low complexity. Over residues 298–307 (NSGSVSPPTS) the composition is skewed to polar residues. Residues 388 to 398 (GSVHKPVRNHS) show a composition bias toward basic residues.

Its subcellular location is the nucleus. Transcription factor that acts as a negative regulator of fluconazole resistance in C.albicans. Also confers fluconazole resistance in S.cerevisiae by activation of the PDR5 gene. The chain is Fluconazole resistance protein 1 (FCR1) from Candida albicans (Yeast).